Reading from the N-terminus, the 139-residue chain is Protein PsiE homolog (139 aa).

Transmembrane regions (helical) follow at residues 20–40 (IVLC…LVKI), 60–80 (AEQA…VQYF), 85–105 (HFPL…LIIV), and 111–131 (VDTI…CLVL).

This sequence belongs to the PsiE family.

It localises to the cell inner membrane. In Haemophilus influenzae (strain 86-028NP), this protein is Protein PsiE homolog.